The following is an 83-amino-acid chain: RNA-binding protein Hfq (83 aa).

Positions 11-71 (DTFLNFVRKN…ISTIMPGQPI (61 aa)) constitute a Sm domain.

Belongs to the Hfq family. In terms of assembly, homohexamer.

RNA chaperone that binds small regulatory RNA (sRNAs) and mRNAs to facilitate mRNA translational regulation in response to envelope stress, environmental stress and changes in metabolite concentrations. Also binds with high specificity to tRNAs. This is RNA-binding protein Hfq from Methylocella silvestris (strain DSM 15510 / CIP 108128 / LMG 27833 / NCIMB 13906 / BL2).